Here is a 186-residue protein sequence, read N- to C-terminus: Transcription factor pgmR (186 aa).

A DNA-binding region (zn(2)-C6 fungal-type) is located at residues 19–46 (CDECGAAKLKCDRGHPSCGRCISLGLKC). Positions 52 to 98 (RKAGKPRRDAQSATRPPPTPGDSGPPLDYNSFGPTSPPSSVGDGATL) are disordered.

It is found in the nucleus. Transcription factor that specifically regulates the expression of the pgm gene cluster that mediates the biosynthesis of cryptic naphthoquinones derived pigments responsible for the coloration of the fruiting bodies. This chain is Transcription factor pgmR, found in Aspergillus terreus (strain NIH 2624 / FGSC A1156).